The following is a 426-amino-acid chain: mRNA cap guanine-N(7) methyltransferase (426 aa).

Residues 138–421 (SPIIKLRNFN…FYTTFAFRKV (284 aa)) enclose the mRNA cap 0 methyltransferase domain. An mRNA-binding site is contributed by 147 to 148 (NN). K151, A169, D191, D220, Q246, and Y251 together coordinate S-adenosyl-L-methionine.

This sequence belongs to the class I-like SAM-binding methyltransferase superfamily. mRNA cap 0 methyltransferase family.

The protein localises to the nucleus. It catalyses the reaction a 5'-end (5'-triphosphoguanosine)-ribonucleoside in mRNA + S-adenosyl-L-methionine = a 5'-end (N(7)-methyl 5'-triphosphoguanosine)-ribonucleoside in mRNA + S-adenosyl-L-homocysteine. Its function is as follows. Responsible for methylating the 5'-cap structure of mRNAs. The sequence is that of mRNA cap guanine-N(7) methyltransferase (ABD1) from Kluyveromyces lactis (strain ATCC 8585 / CBS 2359 / DSM 70799 / NBRC 1267 / NRRL Y-1140 / WM37) (Yeast).